The sequence spans 207 residues: Small ribosomal subunit protein uS4 (207 aa).

The segment at 31 to 53 (KAKFDSKPGQHGRTSGTRTSDFG) is disordered. Polar residues predominate over residues 42–52 (GRTSGTRTSDF). The S4 RNA-binding domain occupies 97–158 (SRLDNVVYRM…KSKKQTRVTE (62 aa)).

Belongs to the universal ribosomal protein uS4 family. Part of the 30S ribosomal subunit. Contacts protein S5. The interaction surface between S4 and S5 is involved in control of translational fidelity.

In terms of biological role, one of the primary rRNA binding proteins, it binds directly to 16S rRNA where it nucleates assembly of the body of the 30S subunit. Functionally, with S5 and S12 plays an important role in translational accuracy. This chain is Small ribosomal subunit protein uS4, found in Polaromonas sp. (strain JS666 / ATCC BAA-500).